The chain runs to 95 residues: Large ribosomal subunit protein eL37x (95 aa).

C19, C22, C34, and C37 together coordinate Zn(2+). The C4-type zinc-finger motif lies at C19–C37. The interval R73 to A95 is disordered. Over residues G77–P86 the composition is skewed to basic and acidic residues.

The protein belongs to the eukaryotic ribosomal protein eL37 family. Zn(2+) is required as a cofactor.

In terms of biological role, binds to the 23S rRNA. The sequence is that of Large ribosomal subunit protein eL37x (RPL37C) from Arabidopsis thaliana (Mouse-ear cress).